The chain runs to 311 residues: ATP synthase subunit gamma, mitochondrial (311 aa).

The transit peptide at 1–33 (MLSRIVSNNATRSVMCHQAQVGILYKTNPVRTY) directs the protein to the mitochondrion.

The protein belongs to the ATPase gamma chain family. In terms of assembly, F-type ATPases have 2 components, CF(1) - the catalytic core - and CF(0) - the membrane proton channel. CF(1) has five subunits: alpha(3), beta(3), gamma(1), delta(1), epsilon(1). CF(0) has three main subunits: a, b and c.

Its subcellular location is the mitochondrion. The protein localises to the mitochondrion inner membrane. Functionally, mitochondrial membrane ATP synthase (F(1)F(0) ATP synthase or Complex V) produces ATP from ADP in the presence of a proton gradient across the membrane which is generated by electron transport complexes of the respiratory chain. F-type ATPases consist of two structural domains, F(1) - containing the extramembraneous catalytic core, and F(0) - containing the membrane proton channel, linked together by a central stalk and a peripheral stalk. During catalysis, ATP synthesis in the catalytic domain of F(1) is coupled via a rotary mechanism of the central stalk subunits to proton translocation. Part of the complex F(1) domain and the central stalk which is part of the complex rotary element. The gamma subunit protrudes into the catalytic domain formed of alpha(3)beta(3). Rotation of the central stalk against the surrounding alpha(3)beta(3) subunits leads to hydrolysis of ATP in three separate catalytic sites on the beta subunits. In Saccharomyces cerevisiae (strain ATCC 204508 / S288c) (Baker's yeast), this protein is ATP synthase subunit gamma, mitochondrial (ATP3).